Here is a 144-residue protein sequence, read N- to C-terminus: Crossover junction endodeoxyribonuclease Hjc (144 aa).

Position 12 (Glu12) interacts with Mg(2+). Ser32 is an active-site residue. Mg(2+) is bound by residues Asp42 and Glu55.

This sequence belongs to the Holliday junction resolvase Hjc family. In terms of assembly, homodimer; forms a 2:1 complex with Hel308 (Hjm). May form a complex with Holliday junction DNA, Hjc and Hjm. The cofactor is Mg(2+).

The catalysed reaction is Endonucleolytic cleavage at a junction such as a reciprocal single-stranded crossover between two homologous DNA duplexes (Holliday junction).. With respect to regulation, cleavage stimulated by PCNA123 and PCNA323 and by RadC2. In terms of biological role, a structure-specific endonuclease that resolves Holliday junction (HJ) intermediates during genetic recombination. Cleaves 4-way DNA junctions introducing paired nicks in opposing strands, leaving a 5'-terminal phosphate and a 3'-terminal hydroxyl group that are subsequently ligated to produce recombinant products. Inhibits the helicase activity of Hel308 (Hjm). The polypeptide is Crossover junction endodeoxyribonuclease Hjc (Sulfurisphaera tokodaii (strain DSM 16993 / JCM 10545 / NBRC 100140 / 7) (Sulfolobus tokodaii)).